The following is a 144-amino-acid chain: Large ribosomal subunit protein uL16 (144 aa).

The protein belongs to the universal ribosomal protein uL16 family. In terms of assembly, part of the 50S ribosomal subunit.

Functionally, binds 23S rRNA and is also seen to make contacts with the A and possibly P site tRNAs. This chain is Large ribosomal subunit protein uL16, found in Caldanaerobacter subterraneus subsp. tengcongensis (strain DSM 15242 / JCM 11007 / NBRC 100824 / MB4) (Thermoanaerobacter tengcongensis).